The sequence spans 537 residues: Apoptosis inhibitor 5-like protein API5 (537 aa).

The ARM-like and Heat-like helical repeats stretch occupies residues 9–363 (AEVERLYELG…TTNSLCGYKI (355 aa)). A disordered region spans residues 465–537 (WMEQPKKPAP…GGRGRGWGYR (73 aa)). The segment covering 474–492 (PTTTGGKRSQPATNGNTPA) has biased composition (polar residues).

It belongs to the API5 family. As to quaternary structure, interacts with AIP1 and AIP2.

It is found in the nucleus. Functionally, putative anti-apoptotic factor involved in the regulation of tapetal programmed cell death (PCD) and degeneration during anther development. Interacts directly with the DEAD-box ATP-dependent RNA helicases AIP1 and AIP2 that form dimers and bind the promoter region of the cysteine protease CP1 involved in tapetum PCD. The sequence is that of Apoptosis inhibitor 5-like protein API5 from Oryza sativa subsp. japonica (Rice).